The primary structure comprises 1627 residues: Pleckstrin homology domain-containing family G member 4B (1627 aa).

Disordered stretches follow at residues 211–349, 381–475, 501–537, 959–1008, 1049–1111, and 1124–1159; these read YSSC…VQPR, LTGA…GQAV, VSTD…GTGD, SEAA…PAQP, TTAH…SKGL, and PLWQ…QVGS. The span at 241–251 shows a compositional bias: polar residues; sequence GSASCPDTLTS. Basic and acidic residues-rich tracts occupy residues 262-273 and 310-322; these read QLRHLPYPERAE and ERPD…DRPK. The span at 465–474 shows a compositional bias: gly residues; that stretch reads RPGGHLGGQA. Over residues 975-985 the composition is skewed to basic and acidic residues; the sequence is PKHERAQEAMR. Polar residues predominate over residues 1057–1068; it reads SACSSEPTQTLA. Positions 1070–1081 are enriched in basic residues; it reads RPRKHPQKKMIK. Polar residues-rich tracts occupy residues 1101-1111 and 1133-1144; these read PDHTSVFSKGL and PVTQSRSLSSPS. The 180-residue stretch at 1161 to 1340 folds into the DH domain; that stretch reads RLRHIMAEMI…CFQLRHGNDL (180 aa). Positions 1352–1460 constitute a PH domain; that stretch reads NLKEQGQLRC…WTDVIGRILW (109 aa). Residues 1519 to 1558 form a disordered region; that stretch reads KGTESQMRGSTAVSSSDHAAPFKRPHSTISDSSTSSSSSQ. Over residues 1521-1535 the composition is skewed to polar residues; it reads TESQMRGSTAVSSSD. Over residues 1545 to 1558 the composition is skewed to low complexity; the sequence is STISDSSTSSSSSQ.

As to quaternary structure, found in a complex with ARHGEF11 and ARHGEF12; binding to ARHGEF11 and ARHGEF12 enhances CDC42 GEF activity of PLEKHG4B, and PLEKHG4B, in turn, inhibits ARHGEF11- and ARHGEF12-mediated RHOA activation. Interacts with ANXA2; this interaction is required for PLEKHG4B localization to cell-cell adhesions.

It is found in the basal cell membrane. Its subcellular location is the cell junction. The protein localises to the nucleus. It localises to the cytoplasm. Its function is as follows. Guanine nucleotide exchange factor (GEF) which specifically activates small GTPase CDC42 by exchanging bound GDP for free GTP. Plays a role in actin cytoskeletal remodeling in the late stage of cell-cell junction formation by regulating the contractility of actin filaments, which prompts the conversion from 'open' to 'closed' junctions. This is Pleckstrin homology domain-containing family G member 4B from Homo sapiens (Human).